A 465-amino-acid polypeptide reads, in one-letter code: 2-methylcitrate synthase, mitochondrial (465 aa).

CoA contacts are provided by Arg72 and Lys190. Position 265 (His265) interacts with oxaloacetate. Leu300 is a CoA binding site. The active site involves His301. 3 residues coordinate CoA: Val342, Gly344, and Tyr345. His347 and Arg356 together coordinate oxaloacetate. Residue His347 is part of the active site. 3 residues coordinate CoA: Thr394, Lys395, and Asn400. Asp402 is an active-site residue. Oxaloacetate-binding residues include Arg428 and Arg448.

Belongs to the citrate synthase family. As to quaternary structure, homodimer.

It localises to the mitochondrion matrix. The enzyme catalyses propanoyl-CoA + oxaloacetate + H2O = (2S,3S)-2-methylcitrate + CoA + H(+). It catalyses the reaction oxaloacetate + acetyl-CoA + H2O = citrate + CoA + H(+). The protein operates within organic acid metabolism; propanoate degradation. With respect to regulation, activity is inhibited by p-chloromercuribenzoate (pCMB), monoiodoacetamide, H(2)O(2), ATP, ADP, NADH, NADPH, Hg(2+) and Zn(2+). In terms of biological role, component of the methylcitrate cycle that catalyzes the synthesis of (2S,3S)-2-methylcitrate from propionyl-CoA and oxaloacetate. Plays an important role in detoxification of propionyl-CoA, an inhibitor of both primary and secondary metabolism. Also has citrate synthase activity using as substrates acetyl-CoA and oxaloacetate. The chain is 2-methylcitrate synthase, mitochondrial from Yarrowia lipolytica (strain CLIB 122 / E 150) (Yeast).